The chain runs to 297 residues: Small ribosomal subunit protein uS2 (297 aa).

Residues 276-297 (DWASSAPAEGWAGEAPATEAKW) are disordered.

It belongs to the universal ribosomal protein uS2 family. Component of the small ribosomal subunit. Mature ribosomes consist of a small (40S) and a large (60S) subunit. The 40S subunit contains about 33 different proteins and 1 molecule of RNA (18S). The 60S subunit contains about 49 different proteins and 3 molecules of RNA (25S, 5.8S and 5S). Interacts with RPS21.

The protein localises to the cytoplasm. Required for the assembly and/or stability of the 40S ribosomal subunit. Required for the processing of the 20S rRNA-precursor to mature 18S rRNA in a late step of the maturation of 40S ribosomal subunits. The protein is Small ribosomal subunit protein uS2 of Uncinocarpus reesii (strain UAMH 1704).